Reading from the N-terminus, the 81-residue chain is MLVLSRKANESIKINSDIEVLILEIKKDAVKIAIKAPENIKIFRSEIYEFIIEENKKSLLKDKHNISKIKSLFNHYFKNEN.

It belongs to the CsrA/RsmA family. As to quaternary structure, homodimer; the beta-strands of each monomer intercalate to form a hydrophobic core, while the alpha-helices form wings that extend away from the core.

The protein resides in the cytoplasm. Functionally, a translational regulator that binds mRNA to regulate translation initiation and/or mRNA stability. Usually binds in the 5'-UTR at or near the Shine-Dalgarno sequence preventing ribosome-binding, thus repressing translation. Its main target seems to be the major flagellin gene, while its function is anatagonized by FliW. The polypeptide is Translational regulator CsrA (Borreliella burgdorferi (strain ATCC 35210 / DSM 4680 / CIP 102532 / B31) (Borrelia burgdorferi)).